Here is a 501-residue protein sequence, read N- to C-terminus: Probable cytosol aminopeptidase (501 aa).

Lys-272 and Asp-277 together coordinate Mn(2+). The active site involves Lys-284. Mn(2+)-binding residues include Asp-295, Asp-354, and Glu-356. Arg-358 is an active-site residue.

It belongs to the peptidase M17 family. Requires Mn(2+) as cofactor.

It is found in the cytoplasm. It catalyses the reaction Release of an N-terminal amino acid, Xaa-|-Yaa-, in which Xaa is preferably Leu, but may be other amino acids including Pro although not Arg or Lys, and Yaa may be Pro. Amino acid amides and methyl esters are also readily hydrolyzed, but rates on arylamides are exceedingly low.. The enzyme catalyses Release of an N-terminal amino acid, preferentially leucine, but not glutamic or aspartic acids.. Functionally, presumably involved in the processing and regular turnover of intracellular proteins. Catalyzes the removal of unsubstituted N-terminal amino acids from various peptides. The protein is Probable cytosol aminopeptidase of Buchnera aphidicola subsp. Baizongia pistaciae (strain Bp).